A 329-amino-acid polypeptide reads, in one-letter code: Short-chain dehydrogenase/reductase prx4 (329 aa).

A signal peptide spans 1-21 (MIPRWQPASIALLLHLDTLRC). NADP(+) is bound by residues Ser-58, Ile-60, and Asn-81. A glycan (N-linked (GlcNAc...) asparagine) is linked at Asn-91. NADP(+)-binding residues include Asp-98, Asn-121, Lys-161, Tyr-194, Lys-198, and Thr-229. The active-site Proton acceptor is Tyr-194. Residue Lys-198 is the Lowers pKa of active site Tyr of the active site. Residues 238–258 (GPLMAAGLPVSSAHMVGLAVV) form a helical membrane-spanning segment.

It belongs to the short-chain dehydrogenases/reductases (SDR) family.

Its subcellular location is the membrane. It participates in sesquiterpene biosynthesis. Functionally, short-chain dehydrogenase/reductase; part of the gene cluster that mediates the biosynthesis of PR-toxin, a bicyclic sesquiterpene belonging to the eremophilane class and acting as a mycotoxin. The first step of the pathway is catalyzed by the aristolochene synthase which performs the cyclization of trans,trans-farnesyl diphosphate (FPP) to the bicyclic sesquiterpene aristolochene. Following the formation of aristolochene, the non-oxygenated aristolochene is converted to the trioxygenated intermediate eremofortin B, via 7-epi-neopetasone. This conversion appears to involve three enzymes, a hydroxysterol oxidase-like enzyme, the quinone-oxidase prx3 that forms the quinone-type-structure in the bicyclic nucleus of aristolochene with the C8-oxo group and the C-3 hydroxyl group, and the P450 monooxygenase prx9 that introduces the epoxide at the double bond between carbons 1 and 2. No monoxy or dioxy-intermediates have been reported to be released to the broth, so these three early oxidative reactions may be coupled together. Eremofortin B is further oxidized by another P450 monooxygenase, that introduces a second epoxide between carbons 7 and 11 prior to acetylation to eremofortin A by the acetyltransferase prx11. The second epoxidation may be performed by a second P450 monooxygenase. After the acetylation step, eremofortin A is converted to eremofortin C and then to PR-toxin. First the conversion of eremofortin A to eremofortin C proceeds by oxidation of the side chain of the molecule at C-12 and is catalyzed by the short-chain oxidoreductase prx1. The cytochrome P450 monooxygenase prx8 also plays a role in this step. The primary alcohol formed at C-12 is finally oxidized by the short-chain alcohol dehydrogenase prx4 that forms PR-toxin. The sequence is that of Short-chain dehydrogenase/reductase prx4 from Penicillium rubens (strain ATCC 28089 / DSM 1075 / NRRL 1951 / Wisconsin 54-1255) (Penicillium chrysogenum).